The sequence spans 558 residues: MTIDPYAYAAAHGPRAGDRLRLGDSGLVIRVESDAQHYGDEFLAGFGKTARDGLHLKAAAVRDTCDVVISNVVVIDAVQGIRKVSIGIREGRVHAIGRAGNPDTLDGVDVVVGTGTSIVSGEGLIATAGAVDTHVHLLSPRIMEASLASGVTTIIGQEFGPVWGVGVNSPWALKHAFGAFDAWPVNIGFLGRGSSSHEAPLIEALAEGGASGFKVHEDMGAHTRALDTALRVAEEHDVQVALHSDGLNECLSVEDTLRVLDGRTIHAFHIEGCGGGHVPNVLKMAGVPHVIGSSTNPTLPFGRDAVAEHYGMIVSVHDLKTDLPGDAAMARDRIRAGTMGAEDVLHDLGAIGITSSDAQGMGRAGETVRRTFAMAGKMKAQFGAEGDDDNARVLRYIAKLTINPALAHGLAHEVGSIEVGKLADLVLWRPDHFGAKPQLVLKSGFPAYGVVGDPNAATDTCEPLVLGPQFGAHGATPAEISVAFVAQAALDQGGDTMPTRRRRVAVRGTRGIGPADLRLNSRTGAVDVDQRTGLVTLDGDPLRSEPAESVSLNRLYFL.

The region spanning 129–558 is the Urease domain; that stretch reads GAVDTHVHLL…SVSLNRLYFL (430 aa). Positions 134, 136, and 214 each coordinate Ni(2+). An N6-carboxylysine modification is found at Lys-214. His-216 provides a ligand contact to substrate. His-243 and His-269 together coordinate Ni(2+). His-317 acts as the Proton donor in catalysis. Residue Asp-357 participates in Ni(2+) binding.

This sequence belongs to the metallo-dependent hydrolases superfamily. Urease alpha subunit family. As to quaternary structure, may form a heterohexamer of 3 UreC (alpha) and 3 UreAB (gamma/beta) subunits. May also form a heterotrimer of UreA (gamma), UreB (beta) and UreC (alpha) subunits. Three heterotrimers associate to form the active enzyme. Ni cation serves as cofactor. In terms of processing, carboxylation allows a single lysine to coordinate two nickel ions.

Its subcellular location is the cytoplasm. It catalyses the reaction urea + 2 H2O + H(+) = hydrogencarbonate + 2 NH4(+). The protein operates within nitrogen metabolism; urea degradation; CO(2) and NH(3) from urea (urease route): step 1/1. This Streptomyces coelicolor (strain ATCC BAA-471 / A3(2) / M145) protein is Urease subunit alpha 2.